A 346-amino-acid polypeptide reads, in one-letter code: Biotin synthase (346 aa).

Residues Gln-38–Thr-256 form the Radical SAM core domain. The [4Fe-4S] cluster site is built by Cys-53, Cys-57, and Cys-60. [2Fe-2S] cluster is bound by residues Cys-97, Cys-128, Cys-188, and Arg-260.

This sequence belongs to the radical SAM superfamily. Biotin synthase family. Homodimer. [4Fe-4S] cluster serves as cofactor. Requires [2Fe-2S] cluster as cofactor.

The enzyme catalyses (4R,5S)-dethiobiotin + (sulfur carrier)-SH + 2 reduced [2Fe-2S]-[ferredoxin] + 2 S-adenosyl-L-methionine = (sulfur carrier)-H + biotin + 2 5'-deoxyadenosine + 2 L-methionine + 2 oxidized [2Fe-2S]-[ferredoxin]. The protein operates within cofactor biosynthesis; biotin biosynthesis; biotin from 7,8-diaminononanoate: step 2/2. Functionally, catalyzes the conversion of dethiobiotin (DTB) to biotin by the insertion of a sulfur atom into dethiobiotin via a radical-based mechanism. The sequence is that of Biotin synthase from Salmonella gallinarum (strain 287/91 / NCTC 13346).